The chain runs to 346 residues: G-protein coupled receptor homolog U12 (346 aa).

At 1 to 31 the chain is on the extracellular side; the sequence is MICYSFAKNVTFAFLIILQNFFSQHDEEYKY. A helical transmembrane segment spans residues 32-56; that stretch reads NYTCITPTVRKAQRLESVINGIMLT. Residues 57-83 are Cytoplasmic-facing; that stretch reads LILPVSTVVICTLLIYYKWTKQTITSP. A helical membrane pass occupies residues 84–108; the sequence is YLITLFISDSLHSLTVLLLTLNREA. The Extracellular segment spans residues 109–115; that stretch reads LTNLNQA. The chain crosses the membrane as a helical span at residues 116 to 142; that stretch reads LCQCVLFVYSASCTYSLCMLAVISTIR. Over 143–159 the chain is Cytoplasmic; sequence YRTLQRRTLNDKNNNHI. Residues 160 to 181 form a helical membrane-spanning segment; sequence KRNVGILFLSSAMCAIPAVLYV. Topologically, residues 182-208 are extracellular; that stretch reads QVEKKKGNYGKCNIHISTQKAYDLFIG. The helical transmembrane segment at 209–229 threads the bilayer; it reads IKIVYCFLWGIFPTVIFSYFY. At 230 to 245 the chain is on the cytoplasmic side; the sequence is VIFGKTLRALTQSKHN. A helical transmembrane segment spans residues 246-272; sequence KTLSFISLLILSFLCIQIPNLLVMSVE. Topologically, residues 273-286 are extracellular; it reads IFFLYIANTSCLGT. Residues 287-310 traverse the membrane as a helical segment; sequence IQREIVQIISRLMPEIHCLSNPLV. Over 311–346 the chain is Cytoplasmic; the sequence is YAFTRTDFRLRFYDFIKCNLCNSSLKRKRNPLTIKN.

Belongs to the G-protein coupled receptor 1 family.

It is found in the host cell membrane. This Homo sapiens (Human) protein is G-protein coupled receptor homolog U12 (U12).